Reading from the N-terminus, the 387-residue chain is 3-ketoacyl-CoA thiolase (387 aa).

C91 (acyl-thioester intermediate) is an active-site residue. Catalysis depends on proton acceptor residues H343 and C373.

It belongs to the thiolase-like superfamily. Thiolase family. In terms of assembly, heterotetramer of two alpha chains (FadB) and two beta chains (FadA).

The protein localises to the cytoplasm. It catalyses the reaction an acyl-CoA + acetyl-CoA = a 3-oxoacyl-CoA + CoA. The protein operates within lipid metabolism; fatty acid beta-oxidation. Its function is as follows. Catalyzes the final step of fatty acid oxidation in which acetyl-CoA is released and the CoA ester of a fatty acid two carbons shorter is formed. This Escherichia coli O9:H4 (strain HS) protein is 3-ketoacyl-CoA thiolase.